The chain runs to 342 residues: Phosphoribosylformylglycinamidine cyclo-ligase (342 aa).

The protein belongs to the AIR synthase family.

The protein resides in the cytoplasm. It carries out the reaction 2-formamido-N(1)-(5-O-phospho-beta-D-ribosyl)acetamidine + ATP = 5-amino-1-(5-phospho-beta-D-ribosyl)imidazole + ADP + phosphate + H(+). Its pathway is purine metabolism; IMP biosynthesis via de novo pathway; 5-amino-1-(5-phospho-D-ribosyl)imidazole from N(2)-formyl-N(1)-(5-phospho-D-ribosyl)glycinamide: step 2/2. This chain is Phosphoribosylformylglycinamidine cyclo-ligase, found in Staphylococcus saprophyticus subsp. saprophyticus (strain ATCC 15305 / DSM 20229 / NCIMB 8711 / NCTC 7292 / S-41).